Here is a 162-residue protein sequence, read N- to C-terminus: MSQTPPPNRLCAVTLDDASIGRSGADVEHERAIAIYDLLEDNRFTPVGDPGEGPYTLHIGLMDNRLVLDIRREKGSEPVVQHHLSLSPLRKVVKDYFLICESYYAAIRTASPTQIEAIDMGRRGLHNEGSTLLQERLKDKVEVDFDTARRLFTLICALHWKG.

This sequence belongs to the UPF0262 family.

The chain is UPF0262 protein AZC_3148 from Azorhizobium caulinodans (strain ATCC 43989 / DSM 5975 / JCM 20966 / LMG 6465 / NBRC 14845 / NCIMB 13405 / ORS 571).